A 295-amino-acid polypeptide reads, in one-letter code: Ribosomal protein L11 methyltransferase (295 aa).

4 residues coordinate S-adenosyl-L-methionine: Thr-145, Gly-166, Asp-188, and Asn-230.

Belongs to the methyltransferase superfamily. PrmA family.

It localises to the cytoplasm. The catalysed reaction is L-lysyl-[protein] + 3 S-adenosyl-L-methionine = N(6),N(6),N(6)-trimethyl-L-lysyl-[protein] + 3 S-adenosyl-L-homocysteine + 3 H(+). Functionally, methylates ribosomal protein L11. This chain is Ribosomal protein L11 methyltransferase, found in Haemophilus influenzae (strain PittEE).